Reading from the N-terminus, the 438-residue chain is Enolase (438 aa).

Substrate is bound by residues His-159 and Glu-168. Glu-211 functions as the Proton donor in the catalytic mechanism. Mg(2+) contacts are provided by Asp-246, Glu-297, and Asp-322. Glu-297 and Asp-322 together coordinate substrate. Lys-347 functions as the Proton acceptor in the catalytic mechanism. Substrate contacts are provided by residues 374-377 (SHRS) and Lys-398.

Belongs to the enolase family. As to quaternary structure, homodimer. Requires Mg(2+) as cofactor.

The protein localises to the cytoplasm. It catalyses the reaction (2R)-2-phosphoglycerate = phosphoenolpyruvate + H2O. It functions in the pathway carbohydrate degradation; glycolysis; pyruvate from D-glyceraldehyde 3-phosphate: step 4/5. The sequence is that of Enolase (emp-7) from Neurospora crassa (strain ATCC 24698 / 74-OR23-1A / CBS 708.71 / DSM 1257 / FGSC 987).